Here is a 58-residue protein sequence, read N- to C-terminus: Large ribosomal subunit protein bL32 (58 aa).

It belongs to the bacterial ribosomal protein bL32 family.

In Sulfurihydrogenibium sp. (strain YO3AOP1), this protein is Large ribosomal subunit protein bL32.